A 425-amino-acid polypeptide reads, in one-letter code: Potassium/proton antiporter CemA (425 aa).

A helical membrane pass occupies residues 89-109 (LFLTTVKCLFILLFVPLGINF). Residues 159–278 (LSENQIFFGL…KTDFASVFRT (120 aa)) are insert. The interval 173–192 (STFPSSEKSQKSEHFSNQDE) is disordered. Basic and acidic residues predominate over residues 180-192 (KSQKSEHFSNQDE). A run of 3 helical transmembrane segments spans residues 300–320 (IEAI…CYLL), 350–370 (ILFI…ELFF), and 386–406 (IFLL…YLIF).

This sequence belongs to the CemA family.

The protein localises to the plastid. The protein resides in the chloroplast inner membrane. The catalysed reaction is K(+)(in) + H(+)(out) = K(+)(out) + H(+)(in). In terms of biological role, contributes to K(+)/H(+) antiport activity by supporting proton efflux to control proton extrusion and homeostasis in chloroplasts in a light-dependent manner to modulate photosynthesis. Prevents excessive induction of non-photochemical quenching (NPQ) under continuous-light conditions. Indirectly promotes efficient inorganic carbon uptake into chloroplasts. The polypeptide is Potassium/proton antiporter CemA (Tetradesmus obliquus (Green alga)).